Here is a 417-residue protein sequence, read N- to C-terminus: MLALLVLVTVALASAHHGGEHFEGEKVFRVNVEDENHINIIRELASTTQIDFWKPDSVTQIKPHSTVDFRVKAEDTVTVENVLKQNELQYKVLISNLRNVVEAQFDSRVRATGHSYEKYNKWETIEAWTQQVATENPALISRSVIGTTFEGRAIYLLKVGKAGQNKPAIFMDCGFHAREWISPAFCQWFVREAVRTYGREIQVTELLDKLDFYVLPVLNIDGYIYTWTKSRFWRKTRSTHTGSSCIGTDPNRNFDAGWCEIGASRNPCDETYCGPAAESEKETKALADFIRNKLSSIKAYLTIHSYSQMMIYPYSYAYKLGENNAELNALAKATVKELASLHGTKYTYGPGATTIYPAAGGSDDWAYDQGIRYSFTFELRDTGRYGFLLPESQIRATCEETFLAIKYVASYVLEHLY.

Residues 1 to 15 (MLALLVLVTVALASA) form the signal peptide. Positions 16-110 (HHGGEHFEGE…VEAQFDSRVR (95 aa)) are cleaved as a propeptide — activation peptide. In terms of domain architecture, Peptidase M14 spans 118–412 (KYNKWETIEA…LAIKYVASYV (295 aa)). An intrachain disulfide couples Cys173 to Cys186. Residues His176 and Glu179 each coordinate Zn(2+). Substrate contacts are provided by residues 176–179 (HARE), Arg234, and 251–252 (NR). Cystine bridges form between Cys245–Cys268 and Cys259–Cys273. Residue His304 coordinates Zn(2+). Residues 305 to 306 (SY) and Tyr356 each bind substrate. Glu378 serves as the catalytic Proton donor/acceptor.

This sequence belongs to the peptidase M14 family. It depends on Zn(2+) as a cofactor. As to expression, pancreas.

The protein localises to the secreted. Its subcellular location is the zymogen granule lumen. The catalysed reaction is Preferential release of a C-terminal lysine or arginine amino acid.. The polypeptide is Carboxypeptidase B (CPB1) (Homo sapiens (Human)).